Consider the following 426-residue polypeptide: 26S proteasome regulatory subunit 7 homolog A (426 aa).

209 to 216 (GPPGTGKT) contacts ATP. Glycyl lysine isopeptide (Lys-Gly) (interchain with G-Cter in ubiquitin) cross-links involve residues Lys400 and Lys415.

Belongs to the AAA ATPase family. In terms of assembly, component of the 19S regulatory particle (RP/PA700) base subcomplex of the 26S proteasome. The 26S proteasome is composed of a core protease (CP), known as the 20S proteasome, capped at one or both ends by the 19S regulatory particle (RP/PA700). The RP/PA700 complex is composed of at least 17 different subunits in two subcomplexes, the base and the lid, which form the portions proximal and distal to the 20S proteolytic core, respectively.

It is found in the cytoplasm. The protein resides in the nucleus. Functionally, the 26S proteasome is involved in the ATP-dependent degradation of ubiquitinated proteins. The regulatory (or ATPase) complex confers ATP dependency and substrate specificity to the 26S complex. This Arabidopsis thaliana (Mouse-ear cress) protein is 26S proteasome regulatory subunit 7 homolog A (RPT1A).